The sequence spans 179 residues: Large ribosomal subunit protein uL6 (179 aa).

The protein belongs to the universal ribosomal protein uL6 family. Part of the 50S ribosomal subunit.

In terms of biological role, this protein binds to the 23S rRNA, and is important in its secondary structure. It is located near the subunit interface in the base of the L7/L12 stalk, and near the tRNA binding site of the peptidyltransferase center. In Metamycoplasma arthritidis (strain 158L3-1) (Mycoplasma arthritidis), this protein is Large ribosomal subunit protein uL6.